Consider the following 117-residue polypeptide: Colipase (117 aa).

Residues 1 to 22 (MNIFNILLPIVVLLLVFGLTAA) form the signal peptide. Disulfide bonds link C39/C50, C45/C61, C49/C83, C71/C91, and C85/C109.

The protein belongs to the colipase family. In terms of assembly, forms a 1:1 stoichiometric complex with pancreatic lipase.

It is found in the secreted. Colipase is a cofactor of pancreatic lipase. It allows the lipase to anchor itself to the lipid-water interface. Without colipase the enzyme is washed off by bile salts, which have an inhibitory effect on the lipase. This Xenopus tropicalis (Western clawed frog) protein is Colipase (clps).